The sequence spans 126 residues: KH homology domain-containing protein 1B (126 aa).

The 60-residue stretch at 19–78 (PLVFDMEEDQEDYIFGPDDEYLHTLEVHSNTLIQLERWFSPTGQTRVTVVGPLKARLWVM) folds into the KH domain.

It belongs to the KHDC1 family.

The protein is KH homology domain-containing protein 1B (Khdc1b) of Mus musculus (Mouse).